The sequence spans 54 residues: ComX pheromone (54 aa).

The propeptide occupies 1–46; the sequence is MQEIVGYLVKNPEVLDEVMKGRASLLNIDKDQLKSIVDAFGGLQIY. Tryptophan 51 carries the 3'-geranyl-2',N2-cyclotryptophan lipid modification.

Interacts directly with the sensor histidine kinase ComP and stimulates its activity. In terms of processing, trp-51 is modified by isoprenylation, probably by geranylation, which is essential for activity. Modified by the tryptophan prenyltransferase ComQ before export to the extracellular environment. The type of isoprenyl derivative differs among the different pherotypes and depends on ComX primary sequence.

It is found in the secreted. Its function is as follows. Part of a major quorum-sensing system that regulates the development of genetic competence. Acts through the activation of the two-component regulatory system ComP/ComA composed of a sensor histidine kinase, ComP, and a response regulator, ComA. The protein is ComX pheromone of Bacillus mojavensis.